Here is a 910-residue protein sequence, read N- to C-terminus: Anoctamin-6 (910 aa).

The Cytoplasmic portion of the chain corresponds to 1–300 (MKKMSRNVLL…YGEKIGIYFA (300 aa)). Residues 301–321 (WLGYYTQMLLLAAVVGVACFL) traverse the membrane as a helical segment. Residues 322–375 (YGYLNQDNCTWSKEVCHPDIGGKIIMCPQCDRLCPFWKLNITCESSKKLCIFDS) lie on the Extracellular side of the membrane. The N-linked (GlcNAc...) asparagine glycan is linked to asparagine 329. 5 cysteine pairs are disulfide-bonded: cysteine 330/cysteine 371, cysteine 337/cysteine 364, cysteine 348/cysteine 806, cysteine 351/cysteine 355, and cysteine 595/cysteine 600. The N-linked (GlcNAc...) asparagine glycan is linked to asparagine 361. A helical transmembrane segment spans residues 376–396 (FGTLVFAVFMGVWVTLFLEFW). Over 397–455 (KRRQAELEYEWDTVELQQEEQARPEYEARCTHVVINEITQEEERIPFTAWGKCIRITLC) the chain is Cytoplasmic. The helical transmembrane segment at 456–476 (ASAVFFWILLIIASVIGIIVY) threads the bilayer. The Extracellular portion of the chain corresponds to 477-509 (RLSVFIVFSAKLPKNINGTDPIQKYLTPQTATS). Asparagine 493 carries N-linked (GlcNAc...) asparagine glycosylation. Residues 510–530 (ITASIISFIIIMILNTIYEKV) traverse the membrane as a helical segment. Topologically, residues 531 to 551 (AIMITNFELPRTQTDYENSLT) are cytoplasmic. A helical transmembrane segment spans residues 552 to 572 (MKMFLFQFVNYYSSCFYIAFF). The Extracellular segment spans residues 573 to 601 (KGKFVGYPGDPVYWLGKYRNEECDPGGCL). The helical transmembrane segment at 602-621 (LELTTQLTIIMGGKAIWNNI) threads the bilayer. At 622–663 (QEVLLPWIMNLIGRFHRVSGSEKITPRWEQDYHLQPMGKLGL) the chain is on the cytoplasmic side. Glutamate 623, glutamate 666, and glutamate 669 together coordinate Ca(2+). Helical transmembrane passes span 664-684 (FYEYLEMIIQFGFVTLFVASF) and 685-705 (PLAPLLALVNNILEIRVDAWK). Residues 706-722 (LTTQFRRLVPEKAQDIG) lie on the Cytoplasmic side of the membrane. The helical transmembrane segment at 723-743 (AWQPIMQGIAILAVVTNAMII) threads the bilayer. The Extracellular segment spans residues 744 to 836 (AFTSDMIPRL…YWHVIAAKLA (93 aa)). 3 N-linked (GlcNAc...) asparagine glycosylation sites follow: asparagine 777, asparagine 790, and asparagine 802. A helical membrane pass occupies residues 837–857 (FIIVMEHVIYSVKFFISYAIP). Residues 858 to 910 (DVSKRTKSKIQREKYLTQKLLHENHLKDMTKNMGVIAERMIEAVDNNLRPKSE) are Cytoplasmic-facing.

This sequence belongs to the anoctamin family. Homodimer. Expressed in embryonic stem cell, fetal liver, retina, chronic myologenous leukemia and intestinal cancer.

The protein resides in the cell membrane. The enzyme catalyses a 1,2-diacyl-sn-glycero-3-phospho-L-serine(in) = a 1,2-diacyl-sn-glycero-3-phospho-L-serine(out). It catalyses the reaction a beta-D-galactosyl-(1&lt;-&gt;1')-N-acylsphing-4-enine(out) = a beta-D-galactosyl-(1&lt;-&gt;1')-N-acylsphing-4-enine(in). The catalysed reaction is a 1,2-diacyl-sn-glycero-3-phosphocholine(in) = a 1,2-diacyl-sn-glycero-3-phosphocholine(out). Exhibits synergistic gating by Ca(2+) and voltage. Inhibited by some non-specific cation channel blockers such as: ruthenium red, 2-aminoethyl diphenylborinate (2APB), gadolinium and cadmium ions. With respect to regulation, (Microbial infection) Activated by SARS coronavirus-2/SARS-CoV-2 spike protein. Small-conductance calcium-activated nonselective cation (SCAN) channel which acts as a regulator of phospholipid scrambling in platelets and osteoblasts. Phospholipid scrambling results in surface exposure of phosphatidylserine which in platelets is essential to trigger the clotting system whereas in osteoblasts is essential for the deposition of hydroxyapatite during bone mineralization. Has calcium-dependent phospholipid scramblase activity; scrambles phosphatidylserine, phosphatidylcholine and galactosylceramide. Can generate outwardly rectifying chloride channel currents in airway epithelial cells and Jurkat T lymphocytes. Its function is as follows. (Microbial infection) Upon SARS coronavirus-2/SARS-CoV-2 infection, is activated by spike protein which increases the amplitude of spontaneous Ca(2+) signals and is required for spike-mediated syncytia. The sequence is that of Anoctamin-6 from Homo sapiens (Human).